Consider the following 253-residue polypeptide: Proteasome subunit alpha (253 aa).

Positions 229 to 253 are disordered; the sequence is ADESQSYIDDIEDAADDSDDDDDEE. Acidic residues predominate over residues 237 to 253; that stretch reads DDIEDAADDSDDDDDEE.

This sequence belongs to the peptidase T1A family. In terms of assembly, the 20S proteasome core is composed of 14 alpha and 14 beta subunits that assemble into four stacked heptameric rings, resulting in a barrel-shaped structure. The two inner rings, each composed of seven catalytic beta subunits, are sandwiched by two outer rings, each composed of seven alpha subunits. The catalytic chamber with the active sites is on the inside of the barrel. Has a gated structure, the ends of the cylinder being occluded by the N-termini of the alpha-subunits. Is capped at one or both ends by the proteasome regulatory ATPase, PAN.

It localises to the cytoplasm. Its activity is regulated as follows. The formation of the proteasomal ATPase PAN-20S proteasome complex, via the docking of the C-termini of PAN into the intersubunit pockets in the alpha-rings, triggers opening of the gate for substrate entry. Interconversion between the open-gate and close-gate conformations leads to a dynamic regulation of the 20S proteasome proteolysis activity. In terms of biological role, component of the proteasome core, a large protease complex with broad specificity involved in protein degradation. This is Proteasome subunit alpha from Halobacterium salinarum (strain ATCC 29341 / DSM 671 / R1).